The chain runs to 190 residues: Small ribosomal subunit protein uS5 (190 aa).

The S5 DRBM domain occupies 19–82 (IIDKLVTINR…ERAKRSMIRV (64 aa)). A disordered region spans residues 161-190 (SVASRRGKKVSDILGRREPVAGQEGEEAHA). Over residues 169–179 (KVSDILGRREP) the composition is skewed to basic and acidic residues.

This sequence belongs to the universal ribosomal protein uS5 family. In terms of assembly, part of the 30S ribosomal subunit. Contacts proteins S4 and S8.

Functionally, with S4 and S12 plays an important role in translational accuracy. In terms of biological role, located at the back of the 30S subunit body where it stabilizes the conformation of the head with respect to the body. The protein is Small ribosomal subunit protein uS5 of Granulibacter bethesdensis (strain ATCC BAA-1260 / CGDNIH1).